Here is a 424-residue protein sequence, read N- to C-terminus: Type II methyltransferase M.BspRI (424 aa).

The 351-residue stretch at 58-408 folds into the SAM-dependent MTase C5-type domain; the sequence is FNVLSLFCGA…KSIAQFAADY (351 aa). Cys156 acts as the S-methylcysteine intermediate in catalysis. Cys181 is modified (S-methylcysteine; by autocatalysis).

This sequence belongs to the class I-like SAM-binding methyltransferase superfamily. C5-methyltransferase family. Monomer. In terms of processing, in the absence of DNA, can self-methylate two cysteine residues.

It carries out the reaction a 2'-deoxycytidine in DNA + S-adenosyl-L-methionine = a 5-methyl-2'-deoxycytidine in DNA + S-adenosyl-L-homocysteine + H(+). A methylase, recognizes the double-stranded sequence 5'-GGCC-3', methylates C-3 on both strands, and protects the DNA from cleavage by the BspRI endonuclease. This is Type II methyltransferase M.BspRI (bspRIM) from Lysinibacillus sphaericus (Bacillus sphaericus).